A 180-amino-acid chain; its full sequence is ATP-dependent protease subunit HslV (180 aa).

Thr5 is a catalytic residue. Residues Gly161, Cys164, and Thr167 each coordinate Na(+).

The protein belongs to the peptidase T1B family. HslV subfamily. As to quaternary structure, a double ring-shaped homohexamer of HslV is capped on each side by a ring-shaped HslU homohexamer. The assembly of the HslU/HslV complex is dependent on binding of ATP.

It localises to the cytoplasm. The enzyme catalyses ATP-dependent cleavage of peptide bonds with broad specificity.. Its activity is regulated as follows. Allosterically activated by HslU binding. Functionally, protease subunit of a proteasome-like degradation complex believed to be a general protein degrading machinery. This is ATP-dependent protease subunit HslV from Campylobacter jejuni subsp. jejuni serotype O:2 (strain ATCC 700819 / NCTC 11168).